The primary structure comprises 244 residues: MKIDILTLFPDMFTGVFGSSILKKAQEKEAVELRVVNFRDYTTSKHNSVDDYPYGGGAGMVLTPQPIFDAVEDLTKETERKPRVVLMCPQGERFTQKKAEELAEEEHLIFVCGHYEGYDERIREHLVTDEISIGDYVLTGGELASMVITDSVVRLLPGVLGNHASQVEDSFSTGLLEHPHYTRPADFRGMKVPDVLMSGNHKNIDEWRHKESLRRTYTRRPDLLEERELSKQEKKWLEQIKEGK.

Residues Gly113 and 133–138 (IGDYVL) each bind S-adenosyl-L-methionine.

This sequence belongs to the RNA methyltransferase TrmD family. In terms of assembly, homodimer.

Its subcellular location is the cytoplasm. It carries out the reaction guanosine(37) in tRNA + S-adenosyl-L-methionine = N(1)-methylguanosine(37) in tRNA + S-adenosyl-L-homocysteine + H(+). In terms of biological role, specifically methylates guanosine-37 in various tRNAs. This chain is tRNA (guanine-N(1)-)-methyltransferase, found in Bacillus anthracis (strain A0248).